The primary structure comprises 129 residues: Large ribosomal subunit protein bL20 (129 aa).

Residues 1 to 17 show a composition bias toward basic residues; the sequence is MARVKRSVNAHKKRRSV. The disordered stretch occupies residues 1-29; it reads MARVKRSVNAHKKRRSVLKASKGYRGQRS.

The protein belongs to the bacterial ribosomal protein bL20 family.

Functionally, binds directly to 23S ribosomal RNA and is necessary for the in vitro assembly process of the 50S ribosomal subunit. It is not involved in the protein synthesizing functions of that subunit. This Mycobacterium ulcerans (strain Agy99) protein is Large ribosomal subunit protein bL20.